We begin with the raw amino-acid sequence, 185 residues long: Ribosome-recycling factor (185 aa).

The disordered stretch occupies residues 141-160 (RIQKDGEAGEDEVGRAEKEL).

This sequence belongs to the RRF family.

It is found in the cytoplasm. Its function is as follows. Responsible for the release of ribosomes from messenger RNA at the termination of protein biosynthesis. May increase the efficiency of translation by recycling ribosomes from one round of translation to another. This Rhodococcus jostii (strain RHA1) protein is Ribosome-recycling factor.